Here is a 466-residue protein sequence, read N- to C-terminus: 3-isopropylmalate dehydratase large subunit (466 aa).

Residues C347, C407, and C410 each contribute to the [4Fe-4S] cluster site.

The protein belongs to the aconitase/IPM isomerase family. LeuC type 1 subfamily. Heterodimer of LeuC and LeuD. The cofactor is [4Fe-4S] cluster.

It carries out the reaction (2R,3S)-3-isopropylmalate = (2S)-2-isopropylmalate. It participates in amino-acid biosynthesis; L-leucine biosynthesis; L-leucine from 3-methyl-2-oxobutanoate: step 2/4. Catalyzes the isomerization between 2-isopropylmalate and 3-isopropylmalate, via the formation of 2-isopropylmaleate. The chain is 3-isopropylmalate dehydratase large subunit from Escherichia coli (strain 55989 / EAEC).